A 920-amino-acid chain; its full sequence is 2-oxoadipate dehydrogenase complex component E1 (920 aa).

Residues 299-322 (QGKTRGRQQVKQDGDYSTDPHSRP) form a disordered region. Positions 308–322 (VKQDGDYSTDPHSRP) are enriched in basic and acidic residues.

This sequence belongs to the alpha-ketoglutarate dehydrogenase family. As to quaternary structure, the 2-oxoadipate dehydrogenase complex is composed of OADH (2-oxoadipate dehydrogenase; E1a), DLST (dihydrolipoamide succinyltransferase; E2) and DLD (dihydrolipoamide dehydrogenase; E3). E1a functional unit is a dimer. It depends on thiamine diphosphate as a cofactor.

The protein resides in the mitochondrion. It carries out the reaction N(6)-[(R)-lipoyl]-L-lysyl-[protein] + 2-oxoadipate + H(+) = N(6)-[(R)-S(8)-glutaryldihydrolipoyl]-L-lysyl-[protein] + CO2. The protein operates within amino-acid degradation. Its function is as follows. 2-oxoadipate dehydrogenase (E1a) component of the 2-oxoadipate dehydrogenase complex (OADHC). Participates in the first step, rate limiting for the overall conversion of 2-oxoadipate (alpha-ketoadipate) to glutaryl-CoA and CO(2) catalyzed by the whole OADHC. Catalyzes the irreversible decarboxylation of 2-oxoadipate via the thiamine diphosphate (ThDP) cofactor and subsequent transfer of the decarboxylated acyl intermediate on an oxidized dihydrolipoyl group that is covalently amidated to the E2 enzyme (dihydrolipoyllysine-residue succinyltransferase or DLST). Can catalyze the decarboxylation of 2-oxoglutarate in vitro, but at a much lower rate than 2-oxoadipate. Responsible for the last step of L-lysine, L-hydroxylysine and L-tryptophan catabolism with the common product being 2-oxoadipate. The polypeptide is 2-oxoadipate dehydrogenase complex component E1 (dhtkd1) (Danio rerio (Zebrafish)).